Consider the following 431-residue polypeptide: Chaperone SurA (431 aa).

The N-terminal stretch at 1–22 is a signal peptide; it reads MKLWKPTLISVLSALTLFNAHA. 2 PpiC domains span residues 173–271 and 280–380; these read TVQY…KIDD and VTEV…EVLD.

It localises to the periplasm. The enzyme catalyses [protein]-peptidylproline (omega=180) = [protein]-peptidylproline (omega=0). Chaperone involved in the correct folding and assembly of outer membrane proteins. Recognizes specific patterns of aromatic residues and the orientation of their side chains, which are found more frequently in integral outer membrane proteins. May act in both early periplasmic and late outer membrane-associated steps of protein maturation. This is Chaperone SurA from Vibrio cholerae serotype O1 (strain ATCC 39315 / El Tor Inaba N16961).